A 392-amino-acid chain; its full sequence is MRILHFSDAEYQQRMLRVKQRMQAQDIDVLIVTEPANINYLTGYDAWSFYTVQALLVFQDVDLPMWIGRSIDKQSAIVTTNLPDERIIPYPDIYVHSPDRHAAQFIAQMLLREAPRAKTVGVEMGAYYYTARDHAELQKALPNVAFKDAELLVNWVRFIKSEREIAYMREAGVITERMMKRAVEVAAPGVRQCDVAAAIYHAQMSGTENYGGLPATSPPHMGFGERAREPHPIFTDRRIDTNSVANIELSGCRLRYHAPMSRTVYFGRPPQSYRDLASYVIEAVETSLDAVRPGVTCEGIELAWRKSMSAHGIEKENRLGYSIGIAYTPTWGERTASIRRTDLTVLEPGAAFHLMGGLWLANTGITITQSFVVTATGHEPLTATPRELVVKD.

This sequence belongs to the peptidase M24 family.

This is an uncharacterized protein from Sinorhizobium fredii (strain NBRC 101917 / NGR234).